The chain runs to 156 residues: Snaclec alboaggregin-B subunit alpha (156 aa).

The signal sequence occupies residues 1 to 23; that stretch reads MGRFIFVSFGLLVVFLSLSGTGA. The 128-residue stretch at 24 to 151 folds into the C-type lectin domain; it reads DCPSDWSSFK…CEQKHIFMCK (128 aa). Disulfide bonds link cysteine 25/cysteine 36, cysteine 53/cysteine 150, and cysteine 125/cysteine 142.

The protein belongs to the snaclec family. As to quaternary structure, heterodimer of subunits alpha and beta; disulfide-linked. In terms of tissue distribution, expressed by the venom gland.

It localises to the secreted. Its function is as follows. Weakly agglutinates platelets at high doses by binding to GPIbalpha (GP1BA). This chain is Snaclec alboaggregin-B subunit alpha, found in Trimeresurus albolabris (White-lipped pit viper).